The chain runs to 495 residues: Transcription termination/antitermination protein NusA (495 aa).

The 66-residue stretch at 135 to 200 (GQIITGIVKK…RGAQLFLSRS (66 aa)) folds into the S1 motif domain. The region spanning 302 to 370 (HHTMDIAVDS…KNLNVSEKVI (69 aa)) is the KH domain. 2 consecutive repeat copies span residues 364 to 414 (NVSE…KNGL) and 439 to 489 (GMNE…RNIC). The tract at residues 364 to 489 (NVSEKVIKTL…LLIMAARNIC (126 aa)) is 2 X 51 AA approximate repeats.

This sequence belongs to the NusA family. As to quaternary structure, monomer. Binds directly to the core enzyme of the DNA-dependent RNA polymerase and to nascent RNA.

Its subcellular location is the cytoplasm. Participates in both transcription termination and antitermination. The protein is Transcription termination/antitermination protein NusA of Buchnera aphidicola subsp. Schizaphis graminum (strain Sg).